Reading from the N-terminus, the 141-residue chain is Sec-independent protein translocase protein TatB (141 aa).

The helical transmembrane segment at 2–22 threads the bilayer; the sequence is FANVGWGEMLVLVIAGLVILG. Residues 92 to 141 are disordered; the sequence is IFTGRFDSTSSDQPGSGKPPKPQSGPGPAAASGPAATTTPASTPFDPDAT. Residues 117–141 are compositionally biased toward low complexity; the sequence is PGPAAASGPAATTTPASTPFDPDAT.

It belongs to the TatB family. The Tat system comprises two distinct complexes: a TatABC complex, containing multiple copies of TatA, TatB and TatC subunits, and a separate TatA complex, containing only TatA subunits. Substrates initially bind to the TatABC complex, which probably triggers association of the separate TatA complex to form the active translocon.

Its subcellular location is the cell membrane. Its function is as follows. Part of the twin-arginine translocation (Tat) system that transports large folded proteins containing a characteristic twin-arginine motif in their signal peptide across membranes. Together with TatC, TatB is part of a receptor directly interacting with Tat signal peptides. TatB may form an oligomeric binding site that transiently accommodates folded Tat precursor proteins before their translocation. This is Sec-independent protein translocase protein TatB from Mycolicibacterium gilvum (strain PYR-GCK) (Mycobacterium gilvum (strain PYR-GCK)).